The sequence spans 113 residues: Protein crumbs homolog 3 (113 aa).

An N-terminal signal peptide occupies residues methionine 1–threonine 24. The interval leucine 23–glycine 44 is disordered. The Extracellular segment spans residues alanine 25 to alanine 49. The N-linked (GlcNAc...) asparagine glycan is linked to asparagine 31. A helical transmembrane segment spans residues isoleucine 50–phenylalanine 70. Over leucine 71–isoleucine 113 the chain is Cytoplasmic. The interval arginine 77–isoleucine 113 is interaction with EPB41L5. The interval arginine 80 to isoleucine 113 is disordered. Polar residues predominate over residues glutamate 83–glutamate 92. Residues glutamate 110 to isoleucine 113 carry the PDZ-binding motif.

In terms of assembly, component of a complex composed of CRB3, PALS1 and PATJ. Interacts (via C-terminus) with PALS1 (via PDZ domain). Interacts with PARD6A. Interacts (via intracellular domain) with EPB41L5. Interacts with WDR83. In terms of tissue distribution, expressed in the apical renal tubules (at protein level). Expressed in the retinal pigment epithelium.

Its subcellular location is the apical cell membrane. The protein resides in the cell junction. The protein localises to the tight junction. Its function is as follows. Involved in the establishment of cell polarity in mammalian epithelial cells. Regulates the morphogenesis of tight junctions. Involved in promoting phosphorylation and cytoplasmic retention of transcriptional coactivators YAP1 and WWTR1/TAZ which leads to suppression of TGFB1-dependent transcription of target genes such as CCN2/CTGF, SERPINE1/PAI1, SNAI1/SNAIL1 and SMAD7. This is Protein crumbs homolog 3 (Crb3) from Mus musculus (Mouse).